The following is a 480-amino-acid chain: Adenosylhomocysteinase (480 aa).

Residues Thr-63, Asp-142, and Glu-203 each coordinate substrate. 204 to 206 contributes to the NAD(+) binding site; sequence TTT. Residues Lys-233 and Asp-237 each contribute to the substrate site. NAD(+) contacts are provided by residues Asn-238, 267 to 272, Glu-290, Asn-325, 346 to 348, and Asn-394; these read GYGDVG and IGH.

It belongs to the adenosylhomocysteinase family. NAD(+) is required as a cofactor.

The protein resides in the cytoplasm. It catalyses the reaction S-adenosyl-L-homocysteine + H2O = L-homocysteine + adenosine. It participates in amino-acid biosynthesis; L-homocysteine biosynthesis; L-homocysteine from S-adenosyl-L-homocysteine: step 1/1. In terms of biological role, may play a key role in the regulation of the intracellular concentration of adenosylhomocysteine. The sequence is that of Adenosylhomocysteinase from Xylella fastidiosa (strain M12).